The sequence spans 431 residues: Putative helicase 055L (431 aa).

The Helicase ATP-binding domain occupies 73-222 (WGHVTSKGYC…ALGAFFGRED (150 aa)). 86-93 (CPPGFGKT) is an ATP binding site. Positions 175–178 (DEAH) match the DEAH box motif. A disordered region spans residues 403–431 (KCDASRPSQSTPTPTGSSQPAPRTRRPQR). The segment covering 407-424 (SRPSQSTPTPTGSSQPAP) has biased composition (low complexity).

The sequence is that of Putative helicase 055L from Frog virus 3 (isolate Goorha) (FV-3).